The chain runs to 213 residues: Sclerostin (213 aa).

An N-terminal signal peptide occupies residues 1–23 (MQLPLALCLVCLLVHAAFRVVEG). Residues 41–71 (GEYPEPPPELENNKTMNRAENGGRPPHHPFE) are disordered. N53 carries an N-linked (GlcNAc...) asparagine glycan. Intrachain disulfides connect C80–C134, C94–C148, C105–C165, and C109–C167. In terms of domain architecture, CTCK spans 82–172 (ELHFTRYVTD…ASCKCKRLTR (91 aa)). N-linked (GlcNAc...) asparagine glycosylation occurs at N175. The disordered stretch occupies residues 178–213 (ELKDFGPEAARPQKGRKPRPRARGAKANQAELENAY). Over residues 190-201 (QKGRKPRPRARG) the composition is skewed to basic residues.

It belongs to the sclerostin family. As to quaternary structure, interacts with LRP4 (via the extracellular domain); the interaction facilitates the inhibition of Wnt signaling. Interacts with LRP5 (via the first two YWTD-EGF repeat domains); the interaction inhibits Wnt-mediated signaling. Interacts with LRP6.

It is found in the secreted. Its subcellular location is the extracellular space. It localises to the extracellular matrix. Its function is as follows. Negative regulator of bone growth that acts through inhibition of Wnt signaling and bone formation. In Chlorocebus aethiops (Green monkey), this protein is Sclerostin.